The primary structure comprises 25 residues: Snaclec bothroalternin subunit alpha/beta (25 aa).

Residues 1–25 form the C-type lectin domain; it reads DCPSDWSNHEGHCYRVFNEWMNWAD. Cysteine 2 and cysteine 13 are oxidised to a cystine.

Belongs to the snaclec family. Heterodimer of subunits alpha and beta; disulfide-linked. As to expression, expressed by the venom gland.

The protein localises to the secreted. Its function is as follows. Thrombin (F2) inhibitor that inhibits aggregation of rabbit platelets induced by alpha-thrombin. The sequence is that of Snaclec bothroalternin subunit alpha/beta from Bothrops alternatus (Urutu).